Reading from the N-terminus, the 337-residue chain is uncharacterized protein (337 aa).

Acidic residues predominate over residues 1 to 11 (MSEIEEEEEEG). The interval 1-20 (MSEIEEEEEEGSASAITGSR) is disordered. N-acetylserine is present on S2. Positions 50 to 130 (ALSTRVSALE…LQRDVSKLEG (81 aa)) form a coiled coil. The disordered stretch occupies residues 139-242 (LQDDDQNAGT…PISPRRHSVS (104 aa)). Residues 170 to 182 (SSIQSQQASEAIE) show a composition bias toward low complexity. The segment covering 197–211 (LSASLPLVSQTTTPR) has biased composition (polar residues). T213 carries the phosphothreonine modification. Residue S217 is modified to Phosphoserine. Over residues 223–233 (ASGTPKTTSRP) the composition is skewed to polar residues. T226 carries the phosphothreonine modification. Residue S235 is modified to Phosphoserine.

This is an uncharacterized protein from Arabidopsis thaliana (Mouse-ear cress).